Consider the following 318-residue polypeptide: Methionyl-tRNA formyltransferase (318 aa).

112–115 (SILP) provides a ligand contact to (6S)-5,6,7,8-tetrahydrofolate.

Belongs to the Fmt family.

The catalysed reaction is L-methionyl-tRNA(fMet) + (6R)-10-formyltetrahydrofolate = N-formyl-L-methionyl-tRNA(fMet) + (6S)-5,6,7,8-tetrahydrofolate + H(+). In terms of biological role, attaches a formyl group to the free amino group of methionyl-tRNA(fMet). The formyl group appears to play a dual role in the initiator identity of N-formylmethionyl-tRNA by promoting its recognition by IF2 and preventing the misappropriation of this tRNA by the elongation apparatus. The sequence is that of Methionyl-tRNA formyltransferase from Shewanella frigidimarina (strain NCIMB 400).